The chain runs to 363 residues: NADH-quinone oxidoreductase subunit H (363 aa).

10 consecutive transmembrane segments (helical) span residues Val-29 to Trp-49, Gly-62 to Phe-82, Val-94 to Val-114, Val-127 to Gly-147, Val-166 to Ser-186, Phe-202 to Val-222, Ile-239 to Leu-257, Ile-264 to Val-286, Leu-293 to Ala-313, and Phe-339 to Ile-359.

Belongs to the complex I subunit 1 family. NDH-1 is composed of 14 different subunits. Subunits NuoA, H, J, K, L, M, N constitute the membrane sector of the complex.

It is found in the cell inner membrane. The enzyme catalyses a quinone + NADH + 5 H(+)(in) = a quinol + NAD(+) + 4 H(+)(out). Its function is as follows. NDH-1 shuttles electrons from NADH, via FMN and iron-sulfur (Fe-S) centers, to quinones in the respiratory chain. The immediate electron acceptor for the enzyme in this species is believed to be ubiquinone. Couples the redox reaction to proton translocation (for every two electrons transferred, four hydrogen ions are translocated across the cytoplasmic membrane), and thus conserves the redox energy in a proton gradient. This subunit may bind ubiquinone. This is NADH-quinone oxidoreductase subunit H from Xylella fastidiosa (strain M12).